We begin with the raw amino-acid sequence, 230 residues long: MSEAVFFVENAEELAKQKMDNINPELSEKFQLLIKFLSRFPESCSNPRSKQVRKNFGKAEHIEYLAQNFNESRLPKKPTPPTTIPDEVVSLVLNVSFDIPQENLNRIKEEHRLSMASENIVGDLLERYLAEKLEPCGWIWCSGTSVKAVDFIHYDNEKDEWGLLQVKNRDNTENSSSSKIRDNTPIKKWFRTFSQRDATNWENFPDEVSSKDLNEDDFRAFVESYLRKIK.

It catalyses the reaction Endonucleolytic cleavage of DNA to give specific double-stranded fragments with terminal 5'-phosphates.. A P subtype restriction enzyme that recognizes the double-stranded sequence 5'-GGWCC-3' and cleaves after G-1. This is Type II restriction enzyme SinI (sinIR) from Salmonella infantis.